The primary structure comprises 168 residues: Endoribonuclease YbeY (168 aa).

Residues H125, H129, and H135 each coordinate Zn(2+).

This sequence belongs to the endoribonuclease YbeY family. Zn(2+) is required as a cofactor.

It is found in the cytoplasm. In terms of biological role, single strand-specific metallo-endoribonuclease involved in late-stage 70S ribosome quality control and in maturation of the 3' terminus of the 16S rRNA. This is Endoribonuclease YbeY from Rhodopseudomonas palustris (strain BisB18).